We begin with the raw amino-acid sequence, 208 residues long: Endoplasmic reticulum vesicle protein 25 (208 aa).

The signal sequence occupies residues 1–15 (MKFLLLLLLAPFISA). At 16 to 177 (LRFDLKAESK…TNESTNERVR (162 aa)) the chain is on the lumenal side. A GOLD domain is found at 28-118 (QMCIRDFVSE…KRAIELDIES (91 aa)). A helical membrane pass occupies residues 178–198 (NFSVLVIIVLTSLGAWQVNYL). The Cytoplasmic segment spans residues 199 to 208 (KNYFKSKHII).

Belongs to the EMP24/GP25L family.

Its subcellular location is the endoplasmic reticulum membrane. It is found in the golgi apparatus membrane. Its function is as follows. Constituent of COPII-coated endoplasmic reticulum-derived transport vesicles. Required for efficient transport of a subset of secretory proteins to the Golgi. Facilitates retrograde transport from the Golgi to the endoplasmic reticulum. The polypeptide is Endoplasmic reticulum vesicle protein 25 (ERV25) (Candida glabrata (strain ATCC 2001 / BCRC 20586 / JCM 3761 / NBRC 0622 / NRRL Y-65 / CBS 138) (Yeast)).